The primary structure comprises 411 residues: Imidazolonepropionase (411 aa).

Histidine 75 and histidine 77 together coordinate Fe(3+). 2 residues coordinate Zn(2+): histidine 75 and histidine 77. 3 residues coordinate 4-imidazolone-5-propanoate: arginine 84, tyrosine 147, and histidine 180. Tyrosine 147 serves as a coordination point for N-formimidoyl-L-glutamate. Position 245 (histidine 245) interacts with Fe(3+). Position 245 (histidine 245) interacts with Zn(2+). Position 248 (glutamine 248) interacts with 4-imidazolone-5-propanoate. Residue aspartate 320 coordinates Fe(3+). Aspartate 320 is a Zn(2+) binding site. Residues asparagine 322 and glycine 324 each coordinate N-formimidoyl-L-glutamate. Threonine 325 is a binding site for 4-imidazolone-5-propanoate.

The protein belongs to the metallo-dependent hydrolases superfamily. HutI family. Requires Zn(2+) as cofactor. The cofactor is Fe(3+).

It localises to the cytoplasm. The enzyme catalyses 4-imidazolone-5-propanoate + H2O = N-formimidoyl-L-glutamate. Its pathway is amino-acid degradation; L-histidine degradation into L-glutamate; N-formimidoyl-L-glutamate from L-histidine: step 3/3. Functionally, catalyzes the hydrolytic cleavage of the carbon-nitrogen bond in imidazolone-5-propanoate to yield N-formimidoyl-L-glutamate. It is the third step in the universal histidine degradation pathway. The sequence is that of Imidazolonepropionase from Photobacterium profundum (strain SS9).